We begin with the raw amino-acid sequence, 141 residues long: Hemoglobin subunit alpha-1/2/3 (141 aa).

In terms of domain architecture, Globin spans 1–141 (VLSPADKTNV…VGTVLTSKYR (141 aa)). Serine 3 bears the Phosphoserine mark. N6-succinyllysine is present on lysine 7. At threonine 8 the chain carries Phosphothreonine. Lysine 11 is subject to N6-succinyllysine. Lysine 16 carries the N6-acetyllysine; alternate modification. N6-succinyllysine; alternate is present on lysine 16. Tyrosine 24 bears the Phosphotyrosine mark. The residue at position 35 (serine 35) is a Phosphoserine. Position 40 is an N6-succinyllysine (lysine 40). Serine 49 is subject to Phosphoserine. Histidine 58 contacts O2. Histidine 87 provides a ligand contact to heme b. At serine 102 the chain carries Phosphoserine. Threonine 108 carries the phosphothreonine modification. Phosphoserine occurs at positions 124 and 131. Phosphothreonine occurs at positions 134 and 137. Residue serine 138 is modified to Phosphoserine.

Belongs to the globin family. In terms of assembly, heterotetramer of two alpha chains and two beta chains. In terms of tissue distribution, red blood cells.

Involved in oxygen transport from the lung to the various peripheral tissues. The chain is Hemoglobin subunit alpha-1/2/3 from Macaca nemestrina (Pig-tailed macaque).